We begin with the raw amino-acid sequence, 386 residues long: 3-hydroxyisobutyryl-CoA hydrolase, mitochondrial (386 aa).

The transit peptide at 1–32 (MGLQGLCRLMSRFNSYKRTNIILQHLKMSNHT) directs the protein to the mitochondrion. Lys-92 is modified (N6-acetyllysine; alternate). Lys-92 is subject to N6-succinyllysine; alternate. Substrate is bound by residues Glu-121, Gly-146, Glu-169, and Asp-177. Lys-221 is subject to N6-acetyllysine; alternate. The residue at position 221 (Lys-221) is an N6-succinyllysine; alternate. Position 234 is a phosphoserine (Ser-234). N6-succinyllysine is present on residues Lys-250 and Lys-257. Lys-297 carries the N6-acetyllysine; alternate modification. Lys-297 is modified (N6-succinyllysine; alternate). Residue Lys-301 is modified to N6-succinyllysine. Residue Lys-353 is modified to N6-acetyllysine; alternate. At Lys-353 the chain carries N6-succinyllysine; alternate. The residue at position 356 (Ser-356) is a Phosphoserine. Residues Lys-360 and Lys-365 each carry the N6-acetyllysine modification. An N6-succinyllysine modification is found at Lys-377.

It belongs to the enoyl-CoA hydratase/isomerase family.

It localises to the mitochondrion. It catalyses the reaction 3-hydroxy-2-methylpropanoyl-CoA + H2O = 3-hydroxy-2-methylpropanoate + CoA + H(+). It participates in amino-acid degradation; L-valine degradation. Functionally, hydrolyzes 3-hydroxyisobutyryl-CoA (HIBYL-CoA), a saline catabolite. Has high activity toward isobutyryl-CoA. Could be an isobutyryl-CoA dehydrogenase that functions in valine catabolism. Also hydrolyzes 3-hydroxypropanoyl-CoA. The protein is 3-hydroxyisobutyryl-CoA hydrolase, mitochondrial (HIBCH) of Bos taurus (Bovine).